The sequence spans 105 residues: Small ribosomal subunit protein uS10 (105 aa).

Belongs to the universal ribosomal protein uS10 family. Part of the 30S ribosomal subunit.

Functionally, involved in the binding of tRNA to the ribosomes. In Anaplasma phagocytophilum (strain HZ), this protein is Small ribosomal subunit protein uS10.